Consider the following 128-residue polypeptide: Histone H2A type 1-H (128 aa).

The tract at residues 1–22 is disordered; that stretch reads MSGRGKQGGKARAKAKTRSSRA. Position 2 is an N-acetylserine (Ser-2). Ser-2 carries the phosphoserine; by RPS6KA5 modification. Arg-4 bears the Citrulline; alternate mark. Arg-4 carries the symmetric dimethylarginine; by PRMT5; alternate modification. N6-(2-hydroxyisobutyryl)lysine; alternate is present on residues Lys-6 and Lys-10. An N6-(beta-hydroxybutyryl)lysine; alternate modification is found at Lys-6. Basic residues predominate over residues 7–19; sequence QGGKARAKAKTRS. Lys-10 is subject to N6-lactoyllysine; alternate. N6-succinyllysine; alternate is present on Lys-10. Glycyl lysine isopeptide (Lys-Gly) (interchain with G-Cter in ubiquitin) cross-links involve residues Lys-14 and Lys-16. Lys-37 carries the N6-(2-hydroxyisobutyryl)lysine; alternate modification. Residue Lys-37 is modified to N6-(beta-hydroxybutyryl)lysine; alternate. Lys-37 is subject to N6-crotonyllysine; alternate. 2 positions are modified to N6-(2-hydroxyisobutyryl)lysine: Lys-75 and Lys-76. Residue Lys-96 is modified to N6-(2-hydroxyisobutyryl)lysine; alternate. Residue Lys-96 is modified to N6-succinyllysine; alternate. Lys-96 bears the N6-glutaryllysine; alternate mark. Residue Gln-105 is modified to N5-methylglutamine. The residue at position 119 (Lys-119) is an N6-(2-hydroxyisobutyryl)lysine; alternate. 2 positions are modified to N6-crotonyllysine; alternate: Lys-119 and Lys-120. Residues Lys-119 and Lys-120 each carry the N6-glutaryllysine; alternate modification. Lys-120 bears the N6-(beta-hydroxybutyryl)lysine; alternate mark. A Glycyl lysine isopeptide (Lys-Gly) (interchain with G-Cter in ubiquitin); alternate cross-link involves residue Lys-120. Phosphothreonine; by DCAF1 is present on Thr-121. Lys-126 is subject to N6-(beta-hydroxybutyryl)lysine; alternate. At Lys-126 the chain carries N6-crotonyllysine; alternate. Lys-126 is modified (N6-glutaryllysine; alternate).

It belongs to the histone H2A family. In terms of assembly, the nucleosome is a histone octamer containing two molecules each of H2A, H2B, H3 and H4 assembled in one H3-H4 heterotetramer and two H2A-H2B heterodimers. The octamer wraps approximately 147 bp of DNA. Deiminated on Arg-4 in granulocytes upon calcium entry. Post-translationally, monoubiquitination of Lys-120 (H2AK119Ub) by RING1, TRIM37 and RNF2/RING2 complex gives a specific tag for epigenetic transcriptional repression and participates in X chromosome inactivation of female mammals. It is involved in the initiation of both imprinted and random X inactivation. Ubiquitinated H2A is enriched in inactive X chromosome chromatin. Ubiquitination of H2A functions downstream of methylation of 'Lys-27' of histone H3 (H3K27me). H2AK119Ub by RNF2/RING2 can also be induced by ultraviolet and may be involved in DNA repair. Following DNA double-strand breaks (DSBs), it is ubiquitinated through 'Lys-63' linkage of ubiquitin moieties by the E2 ligase UBE2N and the E3 ligases RNF8 and RNF168, leading to the recruitment of repair proteins to sites of DNA damage. Ubiquitination at Lys-14 and Lys-16 (H2AK13Ub and H2AK15Ub, respectively) in response to DNA damage is initiated by RNF168 that mediates monoubiquitination at these 2 sites, and 'Lys-63'-linked ubiquitin are then conjugated to monoubiquitin; RNF8 is able to extend 'Lys-63'-linked ubiquitin chains in vitro. H2AK119Ub and ionizing radiation-induced 'Lys-63'-linked ubiquitination (H2AK13Ub and H2AK15Ub) are distinct events. In terms of processing, phosphorylation on Ser-2 (H2AS1ph) is enhanced during mitosis. Phosphorylation on Ser-2 by RPS6KA5/MSK1 directly represses transcription. Acetylation of H3 inhibits Ser-2 phosphorylation by RPS6KA5/MSK1. Phosphorylation at Thr-121 (H2AT120ph) by DCAF1 is present in the regulatory region of many tumor suppresor genes and down-regulates their transcription. Symmetric dimethylation on Arg-4 by the PRDM1/PRMT5 complex may play a crucial role in the germ-cell lineage. Post-translationally, glutamine methylation at Gln-105 (H2AQ104me) by FBL is specifically dedicated to polymerase I. It is present at 35S ribosomal DNA locus and impairs binding of the FACT complex. In terms of processing, crotonylation (Kcr) is specifically present in male germ cells and marks testis-specific genes in post-meiotic cells, including X-linked genes that escape sex chromosome inactivation in haploid cells. Crotonylation marks active promoters and enhancers and confers resistance to transcriptional repressors. It is also associated with post-meiotically activated genes on autosomes. Hydroxybutyrylation of histones is induced by starvation. Post-translationally, lactylated in macrophages by EP300/P300 by using lactoyl-CoA directly derived from endogenous or exogenous lactate, leading to stimulates gene transcription.

It is found in the nucleus. The protein localises to the chromosome. Core component of nucleosome. Nucleosomes wrap and compact DNA into chromatin, limiting DNA accessibility to the cellular machineries which require DNA as a template. Histones thereby play a central role in transcription regulation, DNA repair, DNA replication and chromosomal stability. DNA accessibility is regulated via a complex set of post-translational modifications of histones, also called histone code, and nucleosome remodeling. The polypeptide is Histone H2A type 1-H (Mus musculus (Mouse)).